Reading from the N-terminus, the 443-residue chain is Toxin YjjJ (443 aa).

Residue D342 is the Proton acceptor of the active site.

This sequence belongs to the HipA Ser/Thr kinase family.

Functionally, toxic when overexpressed in E.coli, leading to long filamentous cells. The toxic effect is neutralized by non-cognate antitoxin HipB. Does not seem to inhibit DNA, RNA or protein synthesis, and unlike paralogous toxin HipA its toxic activity is not counteracted by overexpression of GltX. Binds DNA. Might be a protein kinase. In Escherichia coli (strain K12), this protein is Toxin YjjJ (yjjJ).